The following is a 343-amino-acid chain: Inositol 2-dehydrogenase 1 (343 aa).

It belongs to the Gfo/Idh/MocA family. As to quaternary structure, homotetramer.

It catalyses the reaction myo-inositol + NAD(+) = scyllo-inosose + NADH + H(+). In terms of biological role, involved in the oxidation of myo-inositol (MI) to 2-keto-myo-inositol (2KMI or 2-inosose). This Mycolicibacterium vanbaalenii (strain DSM 7251 / JCM 13017 / BCRC 16820 / KCTC 9966 / NRRL B-24157 / PYR-1) (Mycobacterium vanbaalenii) protein is Inositol 2-dehydrogenase 1.